The following is an 885-amino-acid chain: Leucine--tRNA ligase (885 aa).

Residues 43 to 53 (PYTSGQLHMGH) carry the 'HIGH' region motif. The short motif at 571–575 (KMSKS) is the 'KMSKS' region element. K574 lines the ATP pocket. Residues 866-885 (SVANKAEPGRPAIHVDEADD) form a disordered region.

It belongs to the class-I aminoacyl-tRNA synthetase family.

Its subcellular location is the cytoplasm. The catalysed reaction is tRNA(Leu) + L-leucine + ATP = L-leucyl-tRNA(Leu) + AMP + diphosphate. The polypeptide is Leucine--tRNA ligase (Halobacterium salinarum (strain ATCC 700922 / JCM 11081 / NRC-1) (Halobacterium halobium)).